The chain runs to 32 residues: Photosystem II reaction center protein T (32 aa).

A helical transmembrane segment spans residues 3–23; the sequence is TLVYTFLLIGTLAVLFAAVFF.

This sequence belongs to the PsbT family. In terms of assembly, PSII is composed of 1 copy each of membrane proteins PsbA, PsbB, PsbC, PsbD, PsbE, PsbF, PsbH, PsbI, PsbJ, PsbK, PsbL, PsbM, PsbT, PsbX, PsbY, PsbZ, Psb30/Ycf12, at least 3 peripheral proteins of the oxygen-evolving complex and a large number of cofactors. It forms dimeric complexes.

It is found in the plastid. It localises to the chloroplast thylakoid membrane. In terms of biological role, found at the monomer-monomer interface of the photosystem II (PS II) dimer, plays a role in assembly and dimerization of PSII. PSII is a light-driven water plastoquinone oxidoreductase, using light energy to abstract electrons from H(2)O, generating a proton gradient subsequently used for ATP formation. This chain is Photosystem II reaction center protein T, found in Guillardia theta (Cryptophyte).